The chain runs to 848 residues: Neprilysin-11 (848 aa).

The Cytoplasmic portion of the chain corresponds to 1–74 (MPFGNDPPDY…WWKSRTTMEK (74 aa)). The helical; Signal-anchor for type II membrane protein transmembrane segment at 75–95 (LLLPVLLLFCLLTAVLLAVII) threads the bilayer. Residues 96–848 (NTDKRIEAMK…VNPDHKCIVW (753 aa)) lie on the Extracellular side of the membrane. The disordered stretch occupies residues 108 to 161 (HATQTEHAGFGDPTENPTKTAEDPRVPPIVPEAPTSPEPEVTTSTEKPKEPEVC). The segment covering 133-144 (VPPIVPEAPTSP) has biased composition (pro residues). One can recognise a Peptidase M13 domain in the interval 160 to 848 (VCSTPGCVRA…VNPDHKCIVW (689 aa)). C161 and C166 are disulfide-bonded. Residues N178, N249, N284, N312, N337, N364, N398, and N438 are each glycosylated (N-linked (GlcNAc...) asparagine). 4 disulfides stabilise this stretch: C184/C833, C192/C793, C247/C509, and C719/C845. Zn(2+) is bound at residue H682. Residue E683 is part of the active site. H686 is a binding site for Zn(2+). N-linked (GlcNAc...) asparagine glycosylation occurs at N726. A Zn(2+)-binding site is contributed by E744. D748 functions as the Proton donor in the catalytic mechanism.

The protein belongs to the peptidase M13 family. Zn(2+) is required as a cofactor.

It localises to the cell membrane. Its function is as follows. Probable cell surface protease. In Caenorhabditis elegans, this protein is Neprilysin-11 (nep-11).